A 385-amino-acid polypeptide reads, in one-letter code: Acetate kinase (385 aa).

Asparagine 9 is a Mg(2+) binding site. An ATP-binding site is contributed by lysine 16. Arginine 87 serves as a coordination point for substrate. The active-site Proton donor/acceptor is aspartate 144. ATP contacts are provided by residues 202 to 206 (HLGSG) and 277 to 279 (DMR). Glutamate 373 is a Mg(2+) binding site.

It belongs to the acetokinase family. In terms of assembly, homodimer. The cofactor is Mg(2+). Requires Mn(2+) as cofactor.

The protein resides in the cytoplasm. The catalysed reaction is acetate + ATP = acetyl phosphate + ADP. The protein operates within metabolic intermediate biosynthesis; acetyl-CoA biosynthesis; acetyl-CoA from acetate: step 1/2. Catalyzes the formation of acetyl phosphate from acetate and ATP. Can also catalyze the reverse reaction. The protein is Acetate kinase of Rickettsia prowazekii (strain Madrid E).